A 122-amino-acid chain; its full sequence is Small ribosomal subunit protein uS13 (122 aa).

A disordered region spans residues 95 to 122; the sequence is QLPVRGQRTHTNARTRKGKAKPIAGKKK.

It belongs to the universal ribosomal protein uS13 family. In terms of assembly, part of the 30S ribosomal subunit. Forms a loose heterodimer with protein S19. Forms two bridges to the 50S subunit in the 70S ribosome.

Located at the top of the head of the 30S subunit, it contacts several helices of the 16S rRNA. In the 70S ribosome it contacts the 23S rRNA (bridge B1a) and protein L5 of the 50S subunit (bridge B1b), connecting the 2 subunits; these bridges are implicated in subunit movement. Contacts the tRNAs in the A and P-sites. The polypeptide is Small ribosomal subunit protein uS13 (Beijerinckia indica subsp. indica (strain ATCC 9039 / DSM 1715 / NCIMB 8712)).